A 282-amino-acid polypeptide reads, in one-letter code: Energy-coupling factor transporter ATP-binding protein EcfA1 (282 aa).

One can recognise an ABC transporter domain in the interval 6 to 243; sequence ISFDHVTFTY…VEMLKRIGLD (238 aa). ATP is bound at residue 40-47; it reads GHNGSGKS.

It belongs to the ABC transporter superfamily. Energy-coupling factor EcfA family. Forms a stable energy-coupling factor (ECF) transporter complex composed of 2 membrane-embedded substrate-binding proteins (S component), 2 ATP-binding proteins (A component) and 2 transmembrane proteins (T component).

The protein localises to the cell membrane. In terms of biological role, ATP-binding (A) component of a common energy-coupling factor (ECF) ABC-transporter complex. Unlike classic ABC transporters this ECF transporter provides the energy necessary to transport a number of different substrates. The sequence is that of Energy-coupling factor transporter ATP-binding protein EcfA1 from Lactobacillus delbrueckii subsp. bulgaricus (strain ATCC BAA-365 / Lb-18).